The primary structure comprises 97 residues: Small ribosomal subunit protein bS20 (97 aa).

The protein belongs to the bacterial ribosomal protein bS20 family.

Functionally, binds directly to 16S ribosomal RNA. The chain is Small ribosomal subunit protein bS20 from Prochlorococcus marinus (strain MIT 9515).